The primary structure comprises 411 residues: Class E basic helix-loop-helix protein 40 (411 aa).

Positions Met1–Leu20 are disordered. The interval Met1–Gln139 is essential for interaction with BMAL1, E-box binding and repressor activity against the CLOCK-BMAL1 heterodimer. Residues Thr52 to Leu107 enclose the bHLH domain. The interval Leu75 to Leu79 is necessary for interaction with RXRA and repressor activity against RXRA. Residues Phe142–Leu175 form the Orange domain. Residue Lys159 forms a Glycyl lysine isopeptide (Lys-Gly) (interchain with G-Cter in SUMO1, SUMO2 and SUMO3) linkage. A Glycyl lysine isopeptide (Lys-Gly) (interchain with G-Cter in SUMO2) cross-link involves residue Lys167. The tract at residues Phe227–Leu294 is disordered. Phosphoserine is present on Ser235. A compositionally biased stretch (basic and acidic residues) spans Glu248–Val271. Lys279 participates in a covalent cross-link: Glycyl lysine isopeptide (Lys-Gly) (interchain with G-Cter in SUMO1); alternate. A Glycyl lysine isopeptide (Lys-Gly) (interchain with G-Cter in SUMO1, SUMO2 and SUMO3); alternate cross-link involves residue Lys279. Lys279 is covalently cross-linked (Glycyl lysine isopeptide (Lys-Gly) (interchain with G-Cter in SUMO2); alternate). Lys288 is covalently cross-linked (Glycyl lysine isopeptide (Lys-Gly) (interchain with G-Cter in SUMO2)). Ser383 bears the Phosphoserine mark.

Homodimer. Heterodimer with BHLHE41/DEC2. Interacts with ubiquitin-conjugating enzyme UBE2I/UBC9. Interacts with HDAC1, SUMO1, RXRA and BMAL1. Interacts with TCF3/E47. Post-translationally, ubiquitinated; which may lead to proteasomal degradation. In terms of processing, sumoylation inhibits its ubiquitination and promotes its negative regulation of the CLOCK-BMAL1 heterodimer transcriptional activator activity.

It localises to the cytoplasm. It is found in the nucleus. In terms of biological role, transcriptional repressor involved in the regulation of the circadian rhythm by negatively regulating the activity of the clock genes and clock-controlled genes. Acts as the negative limb of a novel autoregulatory feedback loop (DEC loop) which differs from the one formed by the PER and CRY transcriptional repressors (PER/CRY loop). Both these loops are interlocked as it represses the expression of PER1/2 and in turn is repressed by PER1/2 and CRY1/2. Represses the activity of the circadian transcriptional activator: CLOCK-BMAL1|BMAL2 heterodimer by competing for the binding to E-box elements (5'-CACGTG-3') found within the promoters of its target genes. Negatively regulates its own expression and the expression of DBP and BHLHE41/DEC2. Acts as a corepressor of RXR and the RXR-LXR heterodimers and represses the ligand-induced RXRA and NR1H3/LXRA transactivation activity. May function as a transcriptional factor for neuronal differentiation. Represses the transcription of NR0B2 and attentuates the transactivation of NR0B2 by the CLOCK-BMAL1 complex. Drives the circadian rhythm of blood pressure through transcriptional repression of ATP1B1 in the cardiovascular system. The chain is Class E basic helix-loop-helix protein 40 (Bhlhe40) from Mus musculus (Mouse).